Consider the following 526-residue polypeptide: Bifunctional purine biosynthesis protein PurH (526 aa).

The 145-residue stretch at 1–145 (MSKAPLALLS…KNHAHVGIVT (145 aa)) folds into the MGS-like domain.

The protein belongs to the PurH family.

The enzyme catalyses (6R)-10-formyltetrahydrofolate + 5-amino-1-(5-phospho-beta-D-ribosyl)imidazole-4-carboxamide = 5-formamido-1-(5-phospho-D-ribosyl)imidazole-4-carboxamide + (6S)-5,6,7,8-tetrahydrofolate. The catalysed reaction is IMP + H2O = 5-formamido-1-(5-phospho-D-ribosyl)imidazole-4-carboxamide. Its pathway is purine metabolism; IMP biosynthesis via de novo pathway; 5-formamido-1-(5-phospho-D-ribosyl)imidazole-4-carboxamide from 5-amino-1-(5-phospho-D-ribosyl)imidazole-4-carboxamide (10-formyl THF route): step 1/1. It participates in purine metabolism; IMP biosynthesis via de novo pathway; IMP from 5-formamido-1-(5-phospho-D-ribosyl)imidazole-4-carboxamide: step 1/1. The protein is Bifunctional purine biosynthesis protein PurH of Psychrobacter arcticus (strain DSM 17307 / VKM B-2377 / 273-4).